The following is a 472-amino-acid chain: Inhibitor of Apoptosis OPG037 (472 aa).

ANK repeat units follow at residues 97–126, 130–161, 233–263, 267–297, 322–351, and 353–377; these read DGNY…DPNA, HNKT…KINN, DGNT…DVNK, FGDS…VITD, YDST…ICED, and MYYA…SVDS.

The protein belongs to the orthopoxvirus OPG037 protein family. In terms of assembly, may interact with host caspase-9-Apaf-1 complex.

The protein localises to the host cytoplasm. Functionally, inhibits host apoptosis. Acts by associating with host apoptosome. This Homo sapiens (Human) protein is Inhibitor of Apoptosis OPG037 (OPG037).